The sequence spans 153 residues: ORM1-like protein 2 (153 aa).

Over 1–21 (MNVGVAHSEVNPNTRVMSSRG) the chain is Cytoplasmic. The next 2 helical transmembrane spans lie at 22 to 42 (IWLA…SIPF) and 43 to 63 (FSIP…MYLL). The Cytoplasmic portion of the chain corresponds to 64 to 105 (LHTVKGTPFETPDQGKDRLLTHWEQIDYGMQCTSSRKFLSIS). The chain crosses the membrane as a helical span at residues 106-126 (PVVLYLLTSFYIKYDPAHFMI). Residues 127–153 (NTASLLSVLLPKLPQFHGVRVFGINKY) are Extracellular-facing.

This sequence belongs to the ORM family. As to quaternary structure, ceramide-sensitive subunit of the serine palmitoyltransferase (SPT) complex, which is also composed of SPTLC1, SPTLC2/3 and SPTSSA/B.

It localises to the endoplasmic reticulum membrane. In terms of biological role, plays an essential role in the homeostatic regulation of sphingolipid de novo biosynthesis by modulating the activity of the serine palmitoyltransferase (SPT) in response to ceramide levels. When complexed to SPT, the binding of ceramides to its N-terminus stabilizes a conformation that block SPT substrate entry, hence preventing SPT catalytic activity. Through this mechanism, maintains ceramide levels at sufficient concentrations for the production of complex sphingolipids, but which prevents the accumulation of ceramides to levels that trigger apoptosis. This Gallus gallus (Chicken) protein is ORM1-like protein 2 (ORMDL2).